Reading from the N-terminus, the 320-residue chain is Glucosaminate ammonia-lyase (320 aa).

36–43 serves as a coordination point for FAD; the sequence is TGMQAGGQ. Residues cysteine 136 and cysteine 139 are joined by a disulfide bond. 285 to 294 is a binding site for FAD; that stretch reads DVADHVYRQA.

This sequence belongs to the class-II pyridine nucleotide-disulfide oxidoreductase family.

It carries out the reaction 2-amino-2-deoxy-D-gluconate = 2-dehydro-3-deoxy-D-gluconate + NH4(+). Catalyzes the conversion of 2-amino-2-deoxy-D-gluconate (GlcNA) to 2-keto-3-deoxy-D-gluconic acid (KDGA) and ammonia. The protein is Glucosaminate ammonia-lyase of Pseudomonas fluorescens.